The sequence spans 339 residues: MIDDRKLQILRAIIQDYISTGEPVGSRTIAKKYNLGVSSATIRNEMADLEDMGFLEQPHTSAGRIPSSRGYRLYVDRMIEFERLSSEEEGLIRNSIIDGTLYEVDKIIKQTSALLSELTKMTCIVKAPSVHKSFVKSIQLLKVDDVSILCVLVTDNGVIRNTVIKVKSVPISEELIKISKIITERLKNLTIEQINLEVISNLNRALSGYEDIVNAVLPALYESLKGDETSEVFLEGTINIFNYPEYNNIHKAKEILELLHDKKSISELISDSDDMTVKIGDEIFVPEAKECSIISAGYHVGDKSLGTIALIGPRRINYSKVLSIMTEVMKELNETLKNK.

Belongs to the HrcA family.

In terms of biological role, negative regulator of class I heat shock genes (grpE-dnaK-dnaJ and groELS operons). Prevents heat-shock induction of these operons. The sequence is that of Heat-inducible transcription repressor HrcA from Clostridium perfringens (strain 13 / Type A).